The chain runs to 405 residues: S-arrestin (405 aa).

Thr234 is modified (phosphothreonine).

The protein belongs to the arrestin family. In terms of assembly, monomer. Homodimer. Homotetramer. Interacts with RHO (via the phosphorylated C-terminus).

It is found in the cell projection. Its subcellular location is the cilium. The protein localises to the photoreceptor outer segment. It localises to the membrane. In terms of biological role, binds to photoactivated, phosphorylated RHO and terminates RHO signaling via G-proteins by competing with G-proteins for the same binding site on RHO. May play a role in preventing light-dependent degeneration of retinal photoreceptor cells. In Canis lupus familiaris (Dog), this protein is S-arrestin (SAG).